The following is a 356-amino-acid chain: MSSLPLQKSLYPLLRPLGAAYRVLMRARRRRYENGAACGTDVPCVSVGNIGWGGSGKTPVVQWLLQWAAVHGLHAVVLTRGYKASPPGLPYVVTPQSSAAHAGDEPLMLARSCPQATVVVDPVRSRSARWAQERLAPDFFVLDDGFQHVQVARDTDLVLLKKDDLHAEWGRVLPAGSWREGPEALSRAAAFCIKCGSGEFSGLVPDFENRLGSFGVPVFGFSLRPGALIPVCGAHEGAQLPAGAPYVLFSGVGDPAQVAVTVSSFLGYDPVRHHVFADHHGYTQADMDRMAGYGLPLVCTPKDAVKLTAPCGVPVWTLSLETNFHSVWNAQPPAGQAGEGFAQWWQCRWQRLAGLR.

51-58 (GWGGSGKT) is an ATP binding site.

The protein belongs to the LpxK family.

The catalysed reaction is a lipid A disaccharide + ATP = a lipid IVA + ADP + H(+). The protein operates within glycolipid biosynthesis; lipid IV(A) biosynthesis; lipid IV(A) from (3R)-3-hydroxytetradecanoyl-[acyl-carrier-protein] and UDP-N-acetyl-alpha-D-glucosamine: step 6/6. Functionally, transfers the gamma-phosphate of ATP to the 4'-position of a tetraacyldisaccharide 1-phosphate intermediate (termed DS-1-P) to form tetraacyldisaccharide 1,4'-bis-phosphate (lipid IVA). This chain is Tetraacyldisaccharide 4'-kinase, found in Oleidesulfovibrio alaskensis (strain ATCC BAA-1058 / DSM 17464 / G20) (Desulfovibrio alaskensis).